We begin with the raw amino-acid sequence, 523 residues long: MFS-type transporter R5 (523 aa).

A disordered region spans residues 19-42 (QLNEATAQRESATNNPNDSSSIDE). Over residues 21-38 (NEATAQRESATNNPNDSS) the composition is skewed to polar residues. Residues Asn35, Asn94, and Asn143 are each glycosylated (N-linked (GlcNAc...) asparagine). The next 2 helical transmembrane spans lie at 183–203 (AYLTLGLVMGPALGPLIGGLL) and 211–231 (AIFWFLMILGGFFFVLTFTFF). 2 N-linked (GlcNAc...) asparagine glycosylation sites follow: Asn235 and Asn250. The next 6 membrane-spanning stretches (helical) occupy residues 291–311 (FIVCMYGALLFGGYASVISIF), 319–339 (YGYSQVQVGLCYLPFGVGSIL), 381–401 (LTISFPMIFATCGFVVAYGWL), 408–428 (VASVLVIVFLIANVFTGVLIA), 443–463 (ALGAAMNLTRCLMGAGGVAAV), and 470–490 (IGIGYTATATAGVWLAVLPAL).

Belongs to the major facilitator superfamily.

The protein localises to the membrane. Its function is as follows. MFS-type transporter; part of the gene cluster that mediates the biosynthesis of squalestatin S1 (SQS1, also known as zaragozic acid A), a heavily oxidized fungal polyketide that offers potent cholesterol lowering activity by targeting squalene synthase (SS). The sequence is that of MFS-type transporter R5 from Phoma sp. (strain ATCC 20986 / MF5453).